A 483-amino-acid chain; its full sequence is Aspartyl/glutamyl-tRNA(Asn/Gln) amidotransferase subunit B (483 aa).

It belongs to the GatB/GatE family. GatB subfamily. In terms of assembly, heterotrimer of A, B and C subunits.

The catalysed reaction is L-glutamyl-tRNA(Gln) + L-glutamine + ATP + H2O = L-glutaminyl-tRNA(Gln) + L-glutamate + ADP + phosphate + H(+). It catalyses the reaction L-aspartyl-tRNA(Asn) + L-glutamine + ATP + H2O = L-asparaginyl-tRNA(Asn) + L-glutamate + ADP + phosphate + 2 H(+). Functionally, allows the formation of correctly charged Asn-tRNA(Asn) or Gln-tRNA(Gln) through the transamidation of misacylated Asp-tRNA(Asn) or Glu-tRNA(Gln) in organisms which lack either or both of asparaginyl-tRNA or glutaminyl-tRNA synthetases. The reaction takes place in the presence of glutamine and ATP through an activated phospho-Asp-tRNA(Asn) or phospho-Glu-tRNA(Gln). In Rickettsia rickettsii (strain Iowa), this protein is Aspartyl/glutamyl-tRNA(Asn/Gln) amidotransferase subunit B.